Here is a 284-residue protein sequence, read N- to C-terminus: 2-dehydro-3-deoxyphosphooctonate aldolase (284 aa).

It belongs to the KdsA family.

It localises to the cytoplasm. The catalysed reaction is D-arabinose 5-phosphate + phosphoenolpyruvate + H2O = 3-deoxy-alpha-D-manno-2-octulosonate-8-phosphate + phosphate. Its pathway is carbohydrate biosynthesis; 3-deoxy-D-manno-octulosonate biosynthesis; 3-deoxy-D-manno-octulosonate from D-ribulose 5-phosphate: step 2/3. It participates in bacterial outer membrane biogenesis; lipopolysaccharide biosynthesis. The polypeptide is 2-dehydro-3-deoxyphosphooctonate aldolase (Yersinia enterocolitica serotype O:8 / biotype 1B (strain NCTC 13174 / 8081)).